Consider the following 527-residue polypeptide: Chorismate synthase (527 aa).

Residues His-17, His-104, and Asp-485 contribute to the active site.

Belongs to the chorismate synthase family.

Its subcellular location is the cytoplasm. The protein resides in the cytosol. The enzyme catalyses 5-O-(1-carboxyvinyl)-3-phosphoshikimate = chorismate + phosphate. The catalysed reaction is FMNH2 + NADP(+) = FMN + NADPH + 2 H(+). It participates in metabolic intermediate biosynthesis; chorismate biosynthesis; chorismate from D-erythrose 4-phosphate and phosphoenolpyruvate: step 7/7. In terms of biological role, bifunctional chorismate synthase and flavin reductase. Catalyzes the conversion of 5-enolpyruvylshikimate 3-phosphate (EPSP) to form chorismate. Acts also as a flavin reductase (FR) able to generate reduced flavin mononucleotide in the presence of NADPH. The polypeptide is Chorismate synthase (Plasmodium falciparum (isolate 3D7)).